Reading from the N-terminus, the 470-residue chain is Flotillin-like protein 1 (470 aa).

A lipid anchor (S-palmitoyl cysteine) is attached at C35. The stretch at 305 to 354 (EYETKVQEANWELYNKQKQAEAVLYEKQKQAEAQKAQADAAFYSKQKEAE) forms a coiled coil.

Belongs to the band 7/mec-2 family. Flotillin subfamily. In terms of processing, may be palmitoylated.

It is found in the cell membrane. It localises to the membrane. The protein localises to the caveola. Functionally, may act as a scaffolding protein within caveolar membranes, functionally participating in formation of caveolae or caveolae-like vesicles. This Arabidopsis thaliana (Mouse-ear cress) protein is Flotillin-like protein 1 (FLOT1).